Here is a 306-residue protein sequence, read N- to C-terminus: Tyrosine recombinase EUBREC_2677 (306 aa).

Residues 2–84 enclose the Core-binding (CB) domain; it reads NNLQTHISSY…SIKAFFHYLE (83 aa). The Tyr recombinase domain maps to 106-296; it reads ILPKTIPLYI…AVSKQKDILI (191 aa). Active-site residues include R155, K179, H248, R251, and H274. The O-(3'-phospho-DNA)-tyrosine intermediate role is filled by Y283.

This sequence belongs to the 'phage' integrase family.

The protein resides in the cytoplasm. Its function is as follows. Site-specific tyrosine recombinase, which acts by catalyzing the cutting and rejoining of the recombining DNA molecules. This chain is Tyrosine recombinase EUBREC_2677, found in Agathobacter rectalis (strain ATCC 33656 / DSM 3377 / JCM 17463 / KCTC 5835 / VPI 0990) (Eubacterium rectale).